A 247-amino-acid polypeptide reads, in one-letter code: tRNA pseudouridine synthase A 1 (247 aa).

Residue aspartate 53 is the Nucleophile of the active site. Tyrosine 111 contributes to the substrate binding site.

This sequence belongs to the tRNA pseudouridine synthase TruA family. As to quaternary structure, homodimer.

The enzyme catalyses uridine(38/39/40) in tRNA = pseudouridine(38/39/40) in tRNA. Formation of pseudouridine at positions 38, 39 and 40 in the anticodon stem and loop of transfer RNAs. In Bacillus cereus (strain ZK / E33L), this protein is tRNA pseudouridine synthase A 1.